Reading from the N-terminus, the 771-residue chain is MDATQITLVRESGHICAASIYTSWTQSGQLTQNGLSVLYYLLCKNSCGKYVPKFAEITVQQEDLCRYSRHGGSVSAATFASICRAASSAALDAWPLEPLGNADTWRCLHGTALATLRRVLGFKSFYSPVTFETDTNTGLLLKTIPDEHALNNDNTPSTGVLRANFPVAIDVSAVSACNAHTQGTSLAYARLTALKSNGDTQQQTPLDVEVITPKAYIRRKYKSTFSPPIEREGQTSDLFNLEERRLVLSGNRAIVVRVLLPCYFDCLTTDSTVTSSLSILATYRLWYAAAFGKPGVVRPIFAYLGPELNPKGEDRDYFCTVGFPGWTTLRTQTPAVESIRTATEMYMETDGLWPVTGIQAFHYLAPWGQHPPLPPRVQDLIGQIPQDTGHADATVNWDAGRISTVFKQPVQLQDRWMAKFDFSAFFPTIYCAMFPMHFRLGKIVLARMRRGMGCLKPALVSFFGGLRHILPSIYKAIIFIANEISLCVEQTALEQGFAICTYIKDGFWGIFTDLHTRNVCSDQARCSALNLAAACERAVTGLLRIQLGLNFTPAMEPVLRVEGVYTHAFTWCTTGSWLWNLQTNTPPDLVGVPWRSQAARDLKERLSGLLCTATKIRERIQENCIWDRVLYDIWAGQVVEAARKTYVDFFEHVFDRRYTPVYWSLQEQNSETKAIPASYLTYGHMQDKDYKPRQIIMVRNPNPHGPPTVVYWELLPSCACIPPIDCAAHLKPLIHTFVTIINHLLDAHNDFSSPSLKFTDDPLASYNFLFL.

The protein belongs to the herpesviridae HEPA family. Associates with the primase and the helicase to form the helicase-primase complex. Interacts with the origin-binding protein. Interacts with the polymerase catalytic subunit.

It localises to the host nucleus. Its function is as follows. Component of the helicase/primase complex. Unwinds the DNA at the replication forks and generates single-stranded DNA for both leading and lagging strand synthesis. The primase synthesizes short RNA primers on the lagging strand that the polymerase presumably elongates using dNTPs. The primase-associated factor has no known catalytic activity in the complex and may serve to facilitate the formation of the replisome by directly interacting with the origin-binding protein and the polymerase. The polypeptide is DNA helicase/primase complex-associated protein (Varicella-zoster virus (strain Oka vaccine) (HHV-3)).